A 350-amino-acid polypeptide reads, in one-letter code: Putative F-box protein At1g23770 (350 aa).

The segment covering 1-15 (MDTGFADSNNDSSPG) has biased composition (polar residues). Positions 1–29 (MDTGFADSNNDSSPGEGSKRGNSGIEGPV) are disordered. In terms of domain architecture, F-box spans 206 to 252 (PPCLMLLPTELKLKILELLPGVSIGYMACVCTEMRYLASDNDLWEHK).

The chain is Putative F-box protein At1g23770 from Arabidopsis thaliana (Mouse-ear cress).